Consider the following 98-residue polypeptide: Pore-forming peptide amoebapore A (98 aa).

A signal peptide spans 1-21 (MKAIVFVLIFAVAFAVTATHQ). Residues 22–98 (GEILCNLCTG…NAICAKIHAC (77 aa)) enclose the Saposin B-type domain. 3 cysteine pairs are disulfide-bonded: cysteine 26–cysteine 98, cysteine 29–cysteine 92, and cysteine 56–cysteine 67.

As to quaternary structure, monomer (at pH below 4 and pH above 6). Homodimer (at pH 4-6). Hexamer; formed during insertion in the membrane.

The protein localises to the cytoplasmic granule. In terms of biological role, forms pores in the cell membrane of host cells. Has antibacterial activity against M.luteus, no activity against E.coli. Implicated in the cytolytic activity of the parasite. This is Pore-forming peptide amoebapore A from Entamoeba histolytica (strain ATCC 30459 / HM-1:IMSS / ABRM).